Reading from the N-terminus, the 568-residue chain is Dual specificity tyrosine-phosphorylation-regulated kinase 3 (568 aa).

The interval 1–168 is disordered; it reads MKWKEKLGDG…HGVIGGPNNG (168 aa). Polar residues predominate over residues 77–114; sequence SNTVQSDGISDSEKCSPTVSQGKSSDCLNTVKSNSSSK. The Protein kinase domain maps to 189–502; the sequence is YEVLKIIGKG…PAQALRHPWI (314 aa). ATP is bound by residues 195–203 and K218; that span reads IGKGSFGQV. The active-site Proton acceptor is D315. S330 carries the post-translational modification Phosphoserine. At Y349 the chain carries Phosphotyrosine. The Nuclear localization signal signature appears at 448-461; it reads RSRRGKKRGPPGSK.

It belongs to the protein kinase superfamily. CMGC Ser/Thr protein kinase family. MNB/DYRK subfamily. In terms of assembly, interacts with SIRT1. Requires Mg(2+) as cofactor. Post-translationally, protein kinase activity is activated following autophosphorylation at Tyr-349. Autophosphorylation at Ser-330 stabilizes the protein and enhances the protein kinase activity. In terms of processing, ubiquitinated at anaphase by the anaphase-promoting complex (APC/C), leading to its degradation by the proteasome.

The protein resides in the nucleus. It is found in the cytoplasm. It localises to the nucleus speckle. Its subcellular location is the cytoplasmic granule. The protein localises to the cytoskeleton. The protein resides in the microtubule organizing center. It is found in the centrosome. The enzyme catalyses L-seryl-[protein] + ATP = O-phospho-L-seryl-[protein] + ADP + H(+). It carries out the reaction L-threonyl-[protein] + ATP = O-phospho-L-threonyl-[protein] + ADP + H(+). The catalysed reaction is L-tyrosyl-[protein] + ATP = O-phospho-L-tyrosyl-[protein] + ADP + H(+). Its activity is regulated as follows. Protein kinase activity is activated following autophosphorylation at Tyr-349. Its function is as follows. Dual-specificity protein kinase that promotes disassembly of several types of membraneless organelles during mitosis, such as stress granules, nuclear speckles and pericentriolar material. Dual-specificity tyrosine-regulated kinases (DYRKs) autophosphorylate a critical tyrosine residue in their activation loop and phosphorylate their substrate on serine and threonine residues. Acts as a central dissolvase of membraneless organelles during the G2-to-M transition, after the nuclear-envelope breakdown: acts by mediating phosphorylation of multiple serine and threonine residues in unstructured domains of proteins, such as SRRM1 and PCM1. Does not mediate disassembly of all membraneless organelles: disassembly of P-body and nucleolus is not regulated by DYRK3. Dissolution of membraneless organelles at the onset of mitosis is also required to release mitotic regulators, such as ZNF207, from liquid-unmixed organelles where they are sequestered and keep them dissolved during mitosis. Regulates mTORC1 by mediating the dissolution of stress granules: during stressful conditions, DYRK3 partitions from the cytosol to the stress granule, together with mTORC1 components, which prevents mTORC1 signaling. When stress signals are gone, the kinase activity of DYRK3 is required for the dissolution of stress granule and mTORC1 relocation to the cytosol: acts by mediating the phosphorylation of the mTORC1 inhibitor AKT1S1, allowing full reactivation of mTORC1 signaling. Also acts as a negative regulator of EPO-dependent erythropoiesis: may place an upper limit on red cell production during stress erythropoiesis. Inhibits cell death due to cytokine withdrawal in hematopoietic progenitor cells. Promotes cell survival upon genotoxic stress through phosphorylation of SIRT1: this in turn inhibits p53/TP53 activity and apoptosis. The protein is Dual specificity tyrosine-phosphorylation-regulated kinase 3 of Macaca fascicularis (Crab-eating macaque).